The following is a 121-amino-acid chain: NAD(P)H-quinone oxidoreductase subunit M (121 aa).

This sequence belongs to the complex I NdhM subunit family. NDH-1 can be composed of about 15 different subunits; different subcomplexes with different compositions have been identified which probably have different functions.

It is found in the cellular thylakoid membrane. The enzyme catalyses a plastoquinone + NADH + (n+1) H(+)(in) = a plastoquinol + NAD(+) + n H(+)(out). It carries out the reaction a plastoquinone + NADPH + (n+1) H(+)(in) = a plastoquinol + NADP(+) + n H(+)(out). In terms of biological role, NDH-1 shuttles electrons from an unknown electron donor, via FMN and iron-sulfur (Fe-S) centers, to quinones in the respiratory and/or the photosynthetic chain. The immediate electron acceptor for the enzyme in this species is believed to be plastoquinone. Couples the redox reaction to proton translocation, and thus conserves the redox energy in a proton gradient. Cyanobacterial NDH-1 also plays a role in inorganic carbon-concentration. The polypeptide is NAD(P)H-quinone oxidoreductase subunit M (Synechococcus sp. (strain JA-3-3Ab) (Cyanobacteria bacterium Yellowstone A-Prime)).